We begin with the raw amino-acid sequence, 446 residues long: MSETLTLSDAKSIIENQIEELAKRNKEPEWMTKIRYKALEEFMKAPLNDPVIDEETLLNFIAKPEIEGIPEKVESLDDLPPEMKDLLDRLGINEVEQKYIAGLAVQTDTGVIYNQFLQEWAKKGLIVLPTEEAVRRYPDIMKEHFLKLFKAGESKLTAYHIAIWNGGIFLYVKENLKVPFPLHLFFLIQESSLAQAPHITIIAEKNSEVHLIEGCTAPILVRHSLHLDMTEAYLHENAKVRLTVLQNWPEYVHTRPMTRAKVGRNAEFINTTVSLGAGKSNIANPKYWVGENGYVELNGVILGQKDWYIDLGGEMHLQGEGGRGINASKSVIMDESTVITRGKIVAEAKKTKGHISCDALLLSDKARMETYPGLVSLVDEAELSHEAAIGKIKEEELFYLMSRGLSEEKATQLIVKGFVEPMLKDIPIEFVVEIKKIIELAVSGGF.

The protein belongs to the iron-sulfur cluster assembly SufBD family.

This Pyrococcus horikoshii (strain ATCC 700860 / DSM 12428 / JCM 9974 / NBRC 100139 / OT-3) protein is Iron-sulfur cluster assembly SufBD family protein PH1385.